Reading from the N-terminus, the 114-residue chain is Small ribosomal subunit protein bS6 (114 aa).

This sequence belongs to the bacterial ribosomal protein bS6 family.

In terms of biological role, binds together with bS18 to 16S ribosomal RNA. The chain is Small ribosomal subunit protein bS6 from Bacteroides fragilis (strain YCH46).